A 70-amino-acid chain; its full sequence is ATP synthase subunit c (70 aa).

2 helical membrane-spanning segments follow: residues 4 to 24 and 47 to 67; these read IASAIAIGLAALGAGIGNGLI and FVGVALVEALPIIAVVIAFMV.

Belongs to the ATPase C chain family. In terms of assembly, F-type ATPases have 2 components, F(1) - the catalytic core - and F(0) - the membrane proton channel. F(1) has five subunits: alpha(3), beta(3), gamma(1), delta(1), epsilon(1). F(0) has three main subunits: a(1), b(2) and c(10-14). The alpha and beta chains form an alternating ring which encloses part of the gamma chain. F(1) is attached to F(0) by a central stalk formed by the gamma and epsilon chains, while a peripheral stalk is formed by the delta and b chains.

It localises to the cell membrane. F(1)F(0) ATP synthase produces ATP from ADP in the presence of a proton or sodium gradient. F-type ATPases consist of two structural domains, F(1) containing the extramembraneous catalytic core and F(0) containing the membrane proton channel, linked together by a central stalk and a peripheral stalk. During catalysis, ATP synthesis in the catalytic domain of F(1) is coupled via a rotary mechanism of the central stalk subunits to proton translocation. In terms of biological role, key component of the F(0) channel; it plays a direct role in translocation across the membrane. A homomeric c-ring of between 10-14 subunits forms the central stalk rotor element with the F(1) delta and epsilon subunits. This is ATP synthase subunit c from Priestia megaterium (strain ATCC 12872 / QMB1551) (Bacillus megaterium).